Reading from the N-terminus, the 3416-residue chain is Genome polyprotein (3416 aa).

The disordered stretch occupies residues 1–34 (MAKGAVLKGKGGGPPRRVPKETAKKTRQGPGRLP). Residues 1–99 (MAKGAVLKGK…NKRRGKRRST (99 aa)) lie on the Cytoplasmic side of the membrane. Positions 97 to 117 (RSTTGLLTPILLACLATLVFS) are cleaved as a propeptide — ER anchor for the capsid protein C, removed in mature form by serine protease NS3. A helical transmembrane segment spans residues 100–120 (TGLLTPILLACLATLVFSATV). Residues 121 to 243 (RRERTGNMVI…HLTRVEGWVW (123 aa)) lie on the Extracellular side of the membrane. The N-linked (GlcNAc...) asparagine; by host glycan is linked to N145. The helical transmembrane segment at 244-261 (KNKFLTAAFCAVVWMVTD) threads the bilayer. Residue S262 is a topological domain, cytoplasmic. A helical membrane pass occupies residues 263-281 (LPTRFIVITVALCLAPTYA). Residues 282–728 (TRCTHLQNRD…HTAFGAAFNT (447 aa)) are Extracellular-facing. Intrachain disulfides connect C284-C311, C341-C397, C341-C402, C355-C386, C373-C397, and C373-C402. Positions 379–392 (DRGWGNHCGLFGKG) are fusion peptide. N-linked (GlcNAc...) asparagine; by host glycosylation is present at N435. 2 disulfide bridges follow: C467–C571 and C588–C619. A helical transmembrane segment spans residues 729–749 (IFGGVGFLPRILLGVALAWLG). At 750-756 (LNSRNPT) the chain is on the cytoplasmic side. Residues 757-777 (LSVGFLITGGLVLTMTLGVGA) form a helical membrane-spanning segment. At 778 to 1134 (DMGCAIDANR…RSMVLADNGA (357 aa)) the chain is on the extracellular side. 6 disulfide bridges follow: C781/C792, C832/C922, C957/C1002, C1059/C1108, C1070/C1092, and C1091/C1095. N-linked (GlcNAc...) asparagine; by host glycans are attached at residues N862, N985, and N1001. The helical transmembrane segment at 1135 to 1155 (MLSEGGVPGIVAVFVVLELVI) threads the bilayer. At 1156 to 1164 (RRRPTTGSS) the chain is on the lumenal side. The helical transmembrane segment at 1165 to 1185 (VVWCGMVVLGLVVTGLVTIEG) threads the bilayer. Residues 1186–1189 (LCRY) are Cytoplasmic-facing. A helical membrane pass occupies residues 1190–1210 (VVAVGILMSMELGPEIVALVL). The Lumenal segment spans residues 1211-1235 (LQAVFDMRTGLLVAFAVKRAYTTRE). Residues 1236–1256 (AVATYFLLLVLELGFPEASLS) form a helical membrane-spanning segment. Residues 1257–1295 (NIWKWADSLAMGALILQACGQEGRTRVGYLLAAMMTQKD) are Cytoplasmic-facing. The helical transmembrane segment at 1296–1316 (MVIIHTGLTIFLSAATAMAVW) threads the bilayer. At 1317-1361 (SMIKGQRDQKGLSWATPLAGLLGGEGVGLRLLAFRKLAERRNRRS) the chain is on the lumenal side. The helical transmembrane segment at 1362–1379 (FSEPLTVVGVMLTVASGM) threads the bilayer. Residues 1380–1384 (VRHTS) are Cytoplasmic-facing. The helical transmembrane segment at 1385–1405 (QEALCALVAGAFLLLMMVLGT) threads the bilayer. At 1406–1456 (RKMQLTAEWCGEVEWNPDLVNEGGEVNLKVRQDAMGNLHLTEVEKEERAMA) the chain is on the lumenal side. The interval 1412–1451 (AEWCGEVEWNPDLVNEGGEVNLKVRQDAMGNLHLTEVEKE) is interacts with and activates NS3 protease. Residues 1457–1477 (LWLLAGLVASAFHWAGILIVL) constitute an intramembrane region (helical). The Lumenal portion of the chain corresponds to 1478–2162 (AVWTLFEMLG…RMAERDAPEA (685 aa)). The Peptidase S7 domain maps to 1492-1671 (SELVFSGQET…EAEKSRPEIP (180 aa)). Residues H1545, D1569, and S1629 each act as charge relay system; for serine protease NS3 activity in the active site. Residues 1677–1833 (TGWMSKGQIT…ESNGAIMSEE (157 aa)) enclose the Helicase ATP-binding domain. 1690-1697 (MHPGSGKT) serves as a coordination point for ATP. The DEAH box motif lies at 1781-1784 (DEAH). Residues 1844–2002 (GFDWITEYEG…TLRGPVATFY (159 aa)) enclose the Helicase C-terminal domain. K1885 is modified (N6-acetyllysine; by host). A helical transmembrane segment spans residues 2163-2183 (FLTIVEVAVLGVATLGILWCF). Topologically, residues 2184 to 2191 (VARASVSR) are cytoplasmic. An intramembrane region (helical) is located at residues 2192–2211 (MFLGTVVLFAALFLLWIGGV). A topological domain (lumenal) is located at residue D2212. Residues 2213-2233 (YGHMAGIALIFYTLLTVLQPE) traverse the membrane as a helical segment. The Cytoplasmic portion of the chain corresponds to 2234 to 2246 (PGKQRSSDDNRLA). A helical membrane pass occupies residues 2247-2267 (YFLLGLFSLAGLVTANEMGML). The Lumenal segment spans residues 2268–2301 (DKTKADLAGLVWRGEQRHPAWEEWTNVDIQPARS). An intramembrane region (helical) is located at residues 2302 to 2322 (WGTYVLIVSLFTPYMLHQLQT). Residues 2323 to 2345 (KIQQLVNSSVASGAQAMRDLGGG) lie on the Lumenal side of the membrane. Positions 2346 to 2366 (TPFFGVAGHVIALGVTSLVGA) form an intramembrane region, helical. At 2367-2368 (TP) the chain is on the lumenal side. The chain crosses the membrane as a helical span at residues 2369–2389 (MSLGLGVALAAFHLAIVASGL). The Cytoplasmic portion of the chain corresponds to 2390-2432 (EAELTQRAHRVFFSAMVKNPMVDGDVINPFPDGETKPALYERR). Residues 2433-2453 (MSLILAIALCMGSVVLNRTAA) traverse the membrane as a helical segment. The Lumenal portion of the chain corresponds to 2454–2476 (SMTEAGAVGLAALGQLVHPETET). The chain crosses the membrane as a helical span at residues 2477–2497 (LWTMPMACGMAGLVRGSFWGL). Residues 2498 to 3416 (LPMGHRLWLR…WDLKLESNII (919 aa)) are Cytoplasmic-facing. An mRNA cap 0-1 NS5-type MT domain is found at 2514-2778 (GGAEGETLGD…EVDLGTGTRC (265 aa)). S2569 serves as a coordination point for S-adenosyl-L-methionine. S2569 carries the phosphoserine modification. The active-site For 2'-O-MTase activity is K2574. 6 residues coordinate S-adenosyl-L-methionine: G2599, W2600, T2617, I2618, D2644, and V2645. The For 2'-O-MTase activity role is filled by D2659. I2660 provides a ligand contact to S-adenosyl-L-methionine. Residues K2696 and E2732 each act as for 2'-O-MTase activity in the active site. Residues 2732–2736 (EMYFS) form an interaction with host SCRIB region. Y2734 is a binding site for S-adenosyl-L-methionine. The Zn(2+) site is built by E2952, H2956, C2961, and C2964. One can recognise a RdRp catalytic domain in the interval 3042-3191 (GLFYADDTAG…RPIDDRFGKA (150 aa)). Residues H3226, C3242, and C3361 each contribute to the Zn(2+) site.

It in the N-terminal section; belongs to the class I-like SAM-binding methyltransferase superfamily. mRNA cap 0-1 NS5-type methyltransferase family. In terms of assembly, homodimer. Interacts (via N-terminus) with host EXOC1 (via C-terminus); this interaction results in EXOC1 degradation through the proteasome degradation pathway. Forms heterodimers with envelope protein E in the endoplasmic reticulum and Golgi. As to quaternary structure, homodimer; in the endoplasmic reticulum and Golgi. Interacts with protein prM. Interacts with non-structural protein 1. In terms of assembly, homodimer; Homohexamer when secreted. Interacts with envelope protein E. NS1 interacts with NS4B. Interacts with host complement protein CFH; this interaction leads to the degradation of C3. Interacts (via N-terminus) with serine protease NS3. As to quaternary structure, forms a heterodimer with serine protease NS3. May form homooligomers. In terms of assembly, forms a heterodimer with NS2B. Interacts with non-structural protein 2A (via N-terminus). Interacts with NS4B. Interacts with unphosphorylated RNA-directed RNA polymerase NS5; this interaction stimulates RNA-directed RNA polymerase NS5 guanylyltransferase activity. Interacts with serine protease NS3. As to quaternary structure, homodimer. Interacts with host STAT2; this interaction inhibits the phosphorylation of the latter, and, when all viral proteins are present (polyprotein), targets STAT2 for degradation. Interacts with serine protease NS3. In terms of processing, specific enzymatic cleavages in vivo yield mature proteins. Cleavages in the lumen of endoplasmic reticulum are performed by host signal peptidase, whereas cleavages in the cytoplasmic side are performed by serine protease NS3. Signal cleavage at the 2K-4B site requires a prior NS3 protease-mediated cleavage at the 4A-2K site. Cleaved in post-Golgi vesicles by a host furin, releasing the mature small envelope protein M, and peptide pr. This cleavage is incomplete as up to 30% of viral particles still carry uncleaved prM. Post-translationally, N-glycosylated. In terms of processing, N-glycosylated. The excreted form is glycosylated and this is required for efficient secretion of the protein from infected cells. Acetylated by host KAT5. Acetylation modulates NS3 RNA-binding and unwinding activities and plays an important positive role for viral replication. Post-translationally, phosphorylated on serines residues. This phosphorylation may trigger NS5 nuclear localization.

It is found in the virion. The protein localises to the host nucleus. Its subcellular location is the host cytoplasm. It localises to the host perinuclear region. The protein resides in the secreted. It is found in the virion membrane. The protein localises to the host endoplasmic reticulum membrane. The catalysed reaction is Selective hydrolysis of -Xaa-Xaa-|-Yaa- bonds in which each of the Xaa can be either Arg or Lys and Yaa can be either Ser or Ala.. It carries out the reaction RNA(n) + a ribonucleoside 5'-triphosphate = RNA(n+1) + diphosphate. It catalyses the reaction a ribonucleoside 5'-triphosphate + H2O = a ribonucleoside 5'-diphosphate + phosphate + H(+). The enzyme catalyses ATP + H2O = ADP + phosphate + H(+). The catalysed reaction is a 5'-end (5'-triphosphoguanosine)-ribonucleoside in mRNA + S-adenosyl-L-methionine = a 5'-end (N(7)-methyl 5'-triphosphoguanosine)-ribonucleoside in mRNA + S-adenosyl-L-homocysteine. It carries out the reaction a 5'-end (N(7)-methyl 5'-triphosphoguanosine)-ribonucleoside in mRNA + S-adenosyl-L-methionine = a 5'-end (N(7)-methyl 5'-triphosphoguanosine)-(2'-O-methyl-ribonucleoside) in mRNA + S-adenosyl-L-homocysteine + H(+). Its function is as follows. Plays a role in virus budding by binding to the cell membrane and gathering the viral RNA into a nucleocapsid that forms the core of a mature virus particle. During virus entry, may induce genome penetration into the host cytoplasm after hemifusion induced by the surface proteins. Can migrate to the cell nucleus where it modulates host functions. Inhibits RNA silencing by interfering with host Dicer. Functionally, prevents premature fusion activity of envelope proteins in trans-Golgi by binding to envelope protein E at pH6.0. After virion release in extracellular space, gets dissociated from E dimers. In terms of biological role, acts as a chaperone for envelope protein E during intracellular virion assembly by masking and inactivating envelope protein E fusion peptide. prM is the only viral peptide matured by host furin in the trans-Golgi network probably to avoid catastrophic activation of the viral fusion activity in acidic Golgi compartment prior to virion release. prM-E cleavage is inefficient, and many virions are only partially matured. These uncleaved prM would play a role in immune evasion. Its function is as follows. May play a role in virus budding. Exerts cytotoxic effects by activating a mitochondrial apoptotic pathway through M ectodomain. May display a viroporin activity. Binds to host cell surface receptor and mediates fusion between viral and cellular membranes. Envelope protein is synthesized in the endoplasmic reticulum in the form of heterodimer with protein prM. They play a role in virion budding in the ER, and the newly formed immature particle is covered with 60 spikes composed of heterodimer between precursor prM and envelope protein E. The virion is transported to the Golgi apparatus where the low pH causes dissociation of PrM-E heterodimers and formation of E homodimers. prM-E cleavage is inefficient, and many virions are only partially matured. These uncleaved prM would play a role in immune evasion. Functionally, involved in immune evasion, pathogenesis and viral replication. Once cleaved off the polyprotein, is targeted to three destinations: the viral replication cycle, the plasma membrane and the extracellular compartment. Essential for viral replication. Required for formation of the replication complex and recruitment of other non-structural proteins to the ER-derived membrane structures. Excreted as a hexameric lipoparticle that plays a role against host immune response. Antagonizing the complement function. Binds to the host macrophages and dendritic cells. Inhibits signal transduction originating from Toll-like receptor 3 (TLR3). In terms of biological role, component of the viral RNA replication complex that functions in virion assembly and antagonizes the host immune response. Its function is as follows. Required cofactor for the serine protease function of NS3. May have membrane-destabilizing activity and form viroporins. Displays three enzymatic activities: serine protease, NTPase and RNA helicase. NS3 serine protease, in association with NS2B, performs its autocleavage and cleaves the polyprotein at dibasic sites in the cytoplasm: C-prM, NS2A-NS2B, NS2B-NS3, NS3-NS4A, NS4A-2K and NS4B-NS5. NS3 RNA helicase binds RNA and unwinds dsRNA in the 3' to 5' direction. Functionally, regulates the ATPase activity of the NS3 helicase activity. NS4A allows NS3 helicase to conserve energy during unwinding. In terms of biological role, functions as a signal peptide for NS4B and is required for the interferon antagonism activity of the latter. Its function is as follows. Induces the formation of ER-derived membrane vesicles where the viral replication takes place. Inhibits interferon (IFN)-induced host STAT1 phosphorylation and nuclear translocation, thereby preventing the establishment of cellular antiviral state by blocking the IFN-alpha/beta pathway. Inhibits STAT2 translocation in the nucleus after IFN-alpha treatment. Replicates the viral (+) and (-) RNA genome, and performs the capping of genomes in the cytoplasm. NS5 methylates viral RNA cap at guanine N-7 and ribose 2'-O positions. Besides its role in RNA genome replication, also prevents the establishment of cellular antiviral state by blocking the interferon-alpha/beta (IFN-alpha/beta) signaling pathway. Inhibits host TYK2 and STAT2 phosphorylation, thereby preventing activation of JAK-STAT signaling pathway. The polypeptide is Genome polyprotein (Homo sapiens (Human)).